The following is a 434-amino-acid chain: Nicotinate phosphoribosyltransferase (434 aa).

H242 carries the phosphohistidine; by autocatalysis modification.

This sequence belongs to the NAPRTase family. Transiently phosphorylated on a His residue during the reaction cycle. Phosphorylation strongly increases the affinity for substrates and increases the rate of nicotinate D-ribonucleotide production. Dephosphorylation regenerates the low-affinity form of the enzyme, leading to product release.

It carries out the reaction nicotinate + 5-phospho-alpha-D-ribose 1-diphosphate + ATP + H2O = nicotinate beta-D-ribonucleotide + ADP + phosphate + diphosphate. It functions in the pathway cofactor biosynthesis; NAD(+) biosynthesis; nicotinate D-ribonucleotide from nicotinate: step 1/1. In terms of biological role, catalyzes the synthesis of beta-nicotinate D-ribonucleotide from nicotinate and 5-phospho-D-ribose 1-phosphate at the expense of ATP. This is Nicotinate phosphoribosyltransferase from Sinorhizobium medicae (strain WSM419) (Ensifer medicae).